The sequence spans 137 residues: Small ribosomal subunit protein uS12 (137 aa).

The tract at residues 1–55 is disordered; sequence MPTINQLVRKPRKSKVEKSDSPALNKGYNSFKKTQTNVNSPQKRGVCTRVGTMTP. Positions 27-42 are enriched in polar residues; it reads GYNSFKKTQTNVNSPQ. Asp-102 carries the 3-methylthioaspartic acid modification.

The protein belongs to the universal ribosomal protein uS12 family. As to quaternary structure, part of the 30S ribosomal subunit. Contacts proteins S8 and S17. May interact with IF1 in the 30S initiation complex.

In terms of biological role, with S4 and S5 plays an important role in translational accuracy. Its function is as follows. Interacts with and stabilizes bases of the 16S rRNA that are involved in tRNA selection in the A site and with the mRNA backbone. Located at the interface of the 30S and 50S subunits, it traverses the body of the 30S subunit contacting proteins on the other side and probably holding the rRNA structure together. The combined cluster of proteins S8, S12 and S17 appears to hold together the shoulder and platform of the 30S subunit. The chain is Small ribosomal subunit protein uS12 from Enterococcus faecalis (strain ATCC 700802 / V583).